A 215-amino-acid chain; its full sequence is MPGEATETVPATEQELPQPQAETGSGTESDSDESVPELEEQDSTQTATQQAQLAAAAEIDEEPVSKAKQSRSEKKARKAMSKLGLRQVTGVTRVTIRKSKNILFVITKPDVYKSPASDTYIVFGEAKIEDLSQQAQLAAAEKFKVQGEAVSNIQENTQTPTVQEESEEEEVDETGVEVKDIELVMSQANVSRAKAVRALKNNSNDIVNAIMELTM.

The interval 1 to 81 (MPGEATETVP…SEKKARKAMS (81 aa)) is disordered. Residues 9 to 28 (VPATEQELPQPQAETGSGTE) show a composition bias toward polar residues. Residues 29 to 42 (SDSDESVPELEEQD) are compositionally biased toward acidic residues. At Ser43 the chain carries Phosphoserine; by ILK1. The span at 44 to 57 (TQTATQQAQLAAAA) shows a compositional bias: low complexity. A required for DNA-binding region spans residues 69–80 (QSRSEKKARKAM). The 66-residue stretch at 70 to 135 (SRSEKKARKA…AKIEDLSQQA (66 aa)) folds into the NAC-A/B domain. Residues 93-108 (RVTIRKSKNILFVITK) are RNA/DNA-binding. Ser132 carries the phosphoserine modification. N6-acetyllysine; alternate is present on Lys142. A Glycyl lysine isopeptide (Lys-Gly) (interchain with G-Cter in SUMO2); alternate cross-link involves residue Lys142. Thr159 carries the phosphothreonine; by GSK3-beta modification. At Thr161 the chain carries Phosphothreonine. Ser166, Ser186, Ser191, and Ser203 each carry phosphoserine. The UBA domain occupies 176–213 (VEVKDIELVMSQANVSRAKAVRALKNNSNDIVNAIMEL).

The protein belongs to the NAC-alpha family. As to quaternary structure, part of the nascent polypeptide-associated complex (NAC), which is a heterodimer of NACA and BTF3 (via NAC-A/B domains). NAC associates with ribosomes through the BTF3/NACB subunit and contacts the ribosomal protein L23, which is positioned near the exiting site. Both subunits can contact nascent polypeptide chains. NACA may also form homodimers, and only this form binds DNA. Interacts with TBP and JUN. Phosphorylation of Ser-43 by ILK during cell adhesion may promote nuclear localization. Phosphorylation of Thr-159 by GSK3B may promote proteasome mediated degradation. As to expression, isoform 1 appears to be ubiquitously expressed.

It localises to the cytoplasm. It is found in the nucleus. Prevents inappropriate targeting of non-secretory polypeptides to the endoplasmic reticulum (ER). Binds to nascent polypeptide chains as they emerge from the ribosome and blocks their interaction with the signal recognition particle (SRP), which normally targets nascent secretory peptides to the ER. Also reduces the inherent affinity of ribosomes for protein translocation sites in the ER membrane (M sites). Isoform 1 and isoform 2 appear to bind DNA and play roles in transcription. Isoform 1 may function as a specific coactivator for JUN, acting to stabilize the interaction of JUN homodimers with promoter elements. This Mus musculus (Mouse) protein is Nascent polypeptide-associated complex subunit alpha (Naca).